We begin with the raw amino-acid sequence, 194 residues long: ATP-dependent Clp protease proteolytic subunit (194 aa).

Catalysis depends on S97, which acts as the Nucleophile. H122 is a catalytic residue.

It belongs to the peptidase S14 family. In terms of assembly, fourteen ClpP subunits assemble into 2 heptameric rings which stack back to back to give a disk-like structure with a central cavity, resembling the structure of eukaryotic proteasomes.

It localises to the cytoplasm. The enzyme catalyses Hydrolysis of proteins to small peptides in the presence of ATP and magnesium. alpha-casein is the usual test substrate. In the absence of ATP, only oligopeptides shorter than five residues are hydrolyzed (such as succinyl-Leu-Tyr-|-NHMec, and Leu-Tyr-Leu-|-Tyr-Trp, in which cleavage of the -Tyr-|-Leu- and -Tyr-|-Trp bonds also occurs).. In terms of biological role, cleaves peptides in various proteins in a process that requires ATP hydrolysis. Has a chymotrypsin-like activity. Plays a major role in the degradation of misfolded proteins. The polypeptide is ATP-dependent Clp protease proteolytic subunit (Campylobacter jejuni subsp. jejuni serotype O:23/36 (strain 81-176)).